The sequence spans 97 residues: Protein E7 (97 aa).

The E7 terminal domain stretch occupies residues Met1–Thr41. Residues Leu23 to Glu27 carry the LXCXE motif; interaction with host RB1 and TMEM173/STING motif. Residues Cys57 to Cys93 fold into a zinc finger. The short motif at Ile75–Leu83 is the Nuclear export signal element.

Belongs to the papillomaviridae E7 protein family. Homodimer. Homooligomer. Interacts with host RB1; this interaction induces dissociation of RB1-E2F1 complex thereby disrupting RB1 activity. Interacts with host EP300; this interaction represses EP300 transcriptional activity. Interacts with protein E2; this interaction inhibits E7 oncogenic activity. Interacts with host TMEM173/STING; this interaction impairs the ability of TMEM173/STING to sense cytosolic DNA and promote the production of type I interferon (IFN-alpha and IFN-beta). Highly phosphorylated.

The protein resides in the host cytoplasm. It localises to the host nucleus. Functionally, plays a role in viral genome replication by driving entry of quiescent cells into the cell cycle. Stimulation of progression from G1 to S phase allows the virus to efficiently use the cellular DNA replicating machinery to achieve viral genome replication. E7 protein has both transforming and trans-activating activities. Induces the disassembly of the E2F1 transcription factor from RB1, with subsequent transcriptional activation of E2F1-regulated S-phase genes. Interferes with host histone deacetylation mediated by HDAC1 and HDAC2, leading to transcription activation. Also plays a role in the inhibition of both antiviral and antiproliferative functions of host interferon alpha. Interaction with host TMEM173/STING impairs the ability of TMEM173/STING to sense cytosolic DNA and promote the production of type I interferon (IFN-alpha and IFN-beta). The chain is Protein E7 from Homo sapiens (Human).